Here is a 461-residue protein sequence, read N- to C-terminus: Cysteine--tRNA ligase (461 aa).

Residue cysteine 30 participates in Zn(2+) binding. A 'HIGH' region motif is present at residues valine 32–histidine 42. 3 residues coordinate Zn(2+): cysteine 211, histidine 236, and glutamate 240. The short motif at lysine 268–serine 272 is the 'KMSKS' region element. Lysine 271 provides a ligand contact to ATP.

It belongs to the class-I aminoacyl-tRNA synthetase family. As to quaternary structure, monomer. Requires Zn(2+) as cofactor.

Its subcellular location is the cytoplasm. It carries out the reaction tRNA(Cys) + L-cysteine + ATP = L-cysteinyl-tRNA(Cys) + AMP + diphosphate. The polypeptide is Cysteine--tRNA ligase (Shewanella sp. (strain MR-4)).